The chain runs to 169 residues: Putative hydrolase 111R (169 aa).

The Nudix hydrolase domain occupies 46-169 (FEKRKAGVFV…QKILMALSCN (124 aa)). Positions 76–98 (GHMEAYDHSPKTCAERELKEETG) match the Nudix box motif. Residues E92, E96, and D138 each contribute to the Mg(2+) site.

It belongs to the Nudix hydrolase family. Requires Mg(2+) as cofactor. It depends on Mn(2+) as a cofactor.

The protein is Putative hydrolase 111R of Aedes vexans (Inland floodwater mosquito).